We begin with the raw amino-acid sequence, 246 residues long: tRNA pseudouridine synthase A (246 aa).

The Nucleophile role is filled by D54. Y112 provides a ligand contact to substrate.

Belongs to the tRNA pseudouridine synthase TruA family. Homodimer.

The enzyme catalyses uridine(38/39/40) in tRNA = pseudouridine(38/39/40) in tRNA. Formation of pseudouridine at positions 38, 39 and 40 in the anticodon stem and loop of transfer RNAs. The chain is tRNA pseudouridine synthase A from Moorella thermoacetica (strain ATCC 39073 / JCM 9320).